Reading from the N-terminus, the 1770-residue chain is Transposon Ty2-C Gag-Pol polyprotein (1770 aa).

Composition is skewed to polar residues over residues 1–11 (MESQQLHQNPR), 19–39 (ASVT…SASN), and 49–60 (KVNSQQETTPGT). Disordered regions lie at residues 1–88 (MESQ…YQQH) and 355–453 (SQYK…LPDH). The segment at 295 to 397 (ENNINVSDRL…SSKPRAAKAH (103 aa)) is RNA-binding. Positions 369 to 382 (TSPNTTNTKVTTRN) are enriched in low complexity. Composition is skewed to polar residues over residues 399-408 (IATSSKFSRV) and 415-435 (ESTV…GQQQ). Asp457 serves as the catalytic For protease activity; shared with dimeric partner. The integrase-type zinc finger-like stretch occupies residues 579–636 (NVNKSKSVNKYPYPLIHRMLGHANFRSIQKSLKKNAVTYLKESDIEWSNASTYQCPDC). Positions 656-831 (ESYEPFQYLH…AGLDITTILP (176 aa)) constitute an Integrase catalytic domain. 2 residues coordinate Mg(2+): Asp667 and Asp732. Disordered stretches follow at residues 1003-1038 (EMGG…MIDL) and 1057-1205 (GGTE…TEIE). Composition is skewed to polar residues over residues 1009-1024 (ESDT…FTAR) and 1065-1082 (QRNS…STPS). The short motif at 1193–1227 (KKRSLEDNETEIEVSRDTWNNKNMRSLEPPRSKKR) is the Bipartite nuclear localization signal element. The Reverse transcriptase Ty1/copia-type domain maps to 1353 to 1491 (NDYYITQLDI…DILGLEIKYQ (139 aa)). Residues Asp1361, Asp1442, Asp1443, Asp1625, Glu1667, and Asp1700 each contribute to the Mg(2+) site. The RNase H Ty1/copia-type domain occupies 1625–1767 (DASYGNQPYY…IKTFKLLTNK (143 aa)).

As to quaternary structure, the capsid protein forms a homotrimer, from which the VLPs are assembled. The protease is a homodimer, whose active site consists of two apposed aspartic acid residues. Initially, virus-like particles (VLPs) are composed of the structural unprocessed proteins Gag and Gag-Pol, and also contain the host initiator methionine tRNA (tRNA(i)-Met) which serves as a primer for minus-strand DNA synthesis, and a dimer of genomic Ty RNA. Processing of the polyproteins occurs within the particle and proceeds by an ordered pathway, called maturation. First, the protease (PR) is released by autocatalytic cleavage of the Gag-Pol polyprotein, and this cleavage is a prerequisite for subsequent processing at the remaining sites to release the mature structural and catalytic proteins. Maturation takes place prior to the RT reaction and is required to produce transposition-competent VLPs.

It is found in the cytoplasm. Its subcellular location is the nucleus. The catalysed reaction is DNA(n) + a 2'-deoxyribonucleoside 5'-triphosphate = DNA(n+1) + diphosphate. The enzyme catalyses Endonucleolytic cleavage to 5'-phosphomonoester.. Capsid protein (CA) is the structural component of the virus-like particle (VLP), forming the shell that encapsulates the retrotransposons dimeric RNA genome. The particles are assembled from trimer-clustered units and there are holes in the capsid shells that allow for the diffusion of macromolecules. CA also has nucleocapsid-like chaperone activity, promoting primer tRNA(i)-Met annealing to the multipartite primer-binding site (PBS), dimerization of Ty2 RNA and initiation of reverse transcription. Its function is as follows. The aspartyl protease (PR) mediates the proteolytic cleavages of the Gag and Gag-Pol polyproteins after assembly of the VLP. Functionally, reverse transcriptase/ribonuclease H (RT) is a multifunctional enzyme that catalyzes the conversion of the retro-elements RNA genome into dsDNA within the VLP. The enzyme displays a DNA polymerase activity that can copy either DNA or RNA templates, and a ribonuclease H (RNase H) activity that cleaves the RNA strand of RNA-DNA heteroduplexes during plus-strand synthesis and hydrolyzes RNA primers. The conversion leads to a linear dsDNA copy of the retrotransposon that includes long terminal repeats (LTRs) at both ends. In terms of biological role, integrase (IN) targets the VLP to the nucleus, where a subparticle preintegration complex (PIC) containing at least integrase and the newly synthesized dsDNA copy of the retrotransposon must transit the nuclear membrane. Once in the nucleus, integrase performs the integration of the dsDNA into the host genome. This chain is Transposon Ty2-C Gag-Pol polyprotein (TY2B-C), found in Saccharomyces cerevisiae (strain ATCC 204508 / S288c) (Baker's yeast).